The chain runs to 358 residues: Dual-specificity RNA methyltransferase RlmN (358 aa).

Residue glutamate 91 is the Proton acceptor of the active site. The Radical SAM core domain occupies 98-335 (SQGRITQCLS…AIIRKSKGAD (238 aa)). Cysteines 105 and 340 form a disulfide. The [4Fe-4S] cluster site is built by cysteine 112, cysteine 116, and cysteine 119. Residues 164 to 165 (GE), serine 196, 219 to 221 (SLH), and asparagine 295 each bind S-adenosyl-L-methionine. Cysteine 340 acts as the S-methylcysteine intermediate in catalysis.

It belongs to the radical SAM superfamily. RlmN family. The cofactor is [4Fe-4S] cluster.

It is found in the cytoplasm. The catalysed reaction is adenosine(2503) in 23S rRNA + 2 reduced [2Fe-2S]-[ferredoxin] + 2 S-adenosyl-L-methionine = 2-methyladenosine(2503) in 23S rRNA + 5'-deoxyadenosine + L-methionine + 2 oxidized [2Fe-2S]-[ferredoxin] + S-adenosyl-L-homocysteine. It catalyses the reaction adenosine(37) in tRNA + 2 reduced [2Fe-2S]-[ferredoxin] + 2 S-adenosyl-L-methionine = 2-methyladenosine(37) in tRNA + 5'-deoxyadenosine + L-methionine + 2 oxidized [2Fe-2S]-[ferredoxin] + S-adenosyl-L-homocysteine. In terms of biological role, specifically methylates position 2 of adenine 2503 in 23S rRNA and position 2 of adenine 37 in tRNAs. m2A2503 modification seems to play a crucial role in the proofreading step occurring at the peptidyl transferase center and thus would serve to optimize ribosomal fidelity. This is Dual-specificity RNA methyltransferase RlmN from Oleidesulfovibrio alaskensis (strain ATCC BAA-1058 / DSM 17464 / G20) (Desulfovibrio alaskensis).